Consider the following 386-residue polypeptide: Tubulin beta-1 chain (386 aa).

Residues Glu-7, Ser-76, Gly-80, Thr-81, Gly-82, Asn-142, and Asn-164 each contribute to the GTP site. Mg(2+) is bound at residue Glu-7. Positions Tyr-363–Met-386 are disordered. The segment covering Thr-367 to Met-386 has biased composition (acidic residues).

The protein belongs to the tubulin family. As to quaternary structure, dimer of alpha and beta chains. A typical microtubule is a hollow water-filled tube with an outer diameter of 25 nm and an inner diameter of 15 nM. Alpha-beta heterodimers associate head-to-tail to form protofilaments running lengthwise along the microtubule wall with the beta-tubulin subunit facing the microtubule plus end conferring a structural polarity. Microtubules usually have 13 protofilaments but different protofilament numbers can be found in some organisms and specialized cells. Requires Mg(2+) as cofactor.

Its subcellular location is the cytoplasm. It is found in the cytoskeleton. Tubulin is the major constituent of microtubules, a cylinder consisting of laterally associated linear protofilaments composed of alpha- and beta-tubulin heterodimers. Microtubules grow by the addition of GTP-tubulin dimers to the microtubule end, where a stabilizing cap forms. Below the cap, tubulin dimers are in GDP-bound state, owing to GTPase activity of alpha-tubulin. The sequence is that of Tubulin beta-1 chain (TUBB1) from Avena sativa (Oat).